A 1037-amino-acid polypeptide reads, in one-letter code: Tyrosine-protein kinase-like otk (1037 aa).

The N-terminal stretch at 1-22 (MAALRISVWILVQALMMALVSS) is a signal peptide. N-linked (GlcNAc...) asparagine glycosylation is found at asparagine 23 and asparagine 39. Residues 23–582 (NSSHFLQLPQ…GGDGFLVTRA (560 aa)) lie on the Extracellular side of the membrane. 5 Ig-like C2-type domains span residues 25–115 (SHFL…AKLS), 114–200 (LSVI…RVMS), 252–366 (PEDL…APIN), 369–464 (PGTL…VAIN), and 469–559 (PKFS…VQLV). Cystine bridges form between cysteine 46–cysteine 96, cysteine 138–cysteine 189, cysteine 277–cysteine 355, and cysteine 400–cysteine 448. N-linked (GlcNAc...) asparagine glycans are attached at residues asparagine 337, asparagine 418, asparagine 430, asparagine 445, asparagine 458, asparagine 513, and asparagine 525. A disulfide bond links cysteine 491 and cysteine 543. A helical membrane pass occupies residues 583-603 (VLITMTVALAYIVLVVGLMLW). The Cytoplasmic segment spans residues 604–1037 (CRYRRQARKA…LSKAMQSLEK (434 aa)). Disordered stretches follow at residues 618 to 681 (LSTK…KKSA) and 719 to 764 (ATGS…KTSM). The span at 653 to 675 (QSRSKSNGDAQKSDDTACSQQSR) shows a compositional bias: polar residues. Serine 680 is subject to Phosphoserine. Residues 694–1035 (LTELIQIGRG…AALSKAMQSL (342 aa)) enclose the Protein kinase; inactive domain. The segment covering 724–735 (SDKDADTEKQHS) has biased composition (basic and acidic residues).

The protein belongs to the protein kinase superfamily. Tyr protein kinase family. Insulin receptor subfamily. In terms of assembly, interacts with plexA; component of a receptor complex that mediates the repulsive signaling in response to Semaphorin ligands.

The protein resides in the cell membrane. Acts as a calcium-dependent, homophilic cell adhesion molecule that regulates neural recognition during the development of the nervous system. Component of the repulsive Plexin signaling response to regulate motor axon guidance at the embryonic stage. Also component of a receptor complex that is required in the adult visual system to innervate the lamina layer; specific targeting of R1-R6 axons. The sequence is that of Tyrosine-protein kinase-like otk from Drosophila ananassae (Fruit fly).